A 524-amino-acid chain; its full sequence is Cytochrome P450 1A1 (524 aa).

The tract at residues 33–44 (TRTWVPKGLKSP) is mitochondrial targeting signal. A glycan (O-linked (GlcNAc) serine) is linked at S71. A substrate-binding site is contributed by F228. C461 serves as a coordination point for heme.

Belongs to the cytochrome P450 family. In terms of assembly, both Cytochrome P450MT2A and Cytochrome P450MT2B interact with cytosolic chaperones HSP70 and HSP90; this interaction is required for initial targeting to mitochondria. P450MT2B interacts (via mitochondrial targeting signal) with TOMM40 (via N-terminus); this interaction is required for translocation across the mitochondrial outer membrane. Requires heme as cofactor. In terms of processing, two forms; MT2A (long form) and MT2B (short form); are produced by NH2-terminal proteolytic cleavage. This cleavage activates a cryptic mitochondrial targeting signal. As to expression, liver.

It is found in the cytoplasm. Its subcellular location is the endoplasmic reticulum membrane. The protein resides in the mitochondrion inner membrane. The protein localises to the microsome membrane. The catalysed reaction is an organic molecule + reduced [NADPH--hemoprotein reductase] + O2 = an alcohol + oxidized [NADPH--hemoprotein reductase] + H2O + H(+). It carries out the reaction estrone + reduced [NADPH--hemoprotein reductase] + O2 = 2-hydroxyestrone + oxidized [NADPH--hemoprotein reductase] + H2O + H(+). The enzyme catalyses estrone + reduced [NADPH--hemoprotein reductase] + O2 = 4-hydroxyestrone + oxidized [NADPH--hemoprotein reductase] + H2O + H(+). It catalyses the reaction estrone + reduced [NADPH--hemoprotein reductase] + O2 = 6alpha-hydroxyestrone + oxidized [NADPH--hemoprotein reductase] + H2O + H(+). The catalysed reaction is estrone + reduced [NADPH--hemoprotein reductase] + O2 = 15alpha-hydroxyestrone + oxidized [NADPH--hemoprotein reductase] + H2O + H(+). It carries out the reaction estrone + reduced [NADPH--hemoprotein reductase] + O2 = 16alpha-hydroxyestrone + oxidized [NADPH--hemoprotein reductase] + H2O + H(+). The enzyme catalyses 17beta-estradiol + reduced [NADPH--hemoprotein reductase] + O2 = 2-hydroxy-17beta-estradiol + oxidized [NADPH--hemoprotein reductase] + H2O + H(+). It catalyses the reaction 17beta-estradiol + reduced [NADPH--hemoprotein reductase] + O2 = 4-hydroxy-17beta-estradiol + oxidized [NADPH--hemoprotein reductase] + H2O + H(+). The catalysed reaction is 17beta-estradiol + reduced [NADPH--hemoprotein reductase] + O2 = 6alpha-hydroxy-17beta-estradiol + oxidized [NADPH--hemoprotein reductase] + H2O + H(+). It carries out the reaction 17beta-estradiol + reduced [NADPH--hemoprotein reductase] + O2 = 7alpha-hydroxy-17beta-estradiol + oxidized [NADPH--hemoprotein reductase] + H2O + H(+). The enzyme catalyses 17beta-estradiol + reduced [NADPH--hemoprotein reductase] + O2 = 15alpha-hydroxy-17beta-estradiol + oxidized [NADPH--hemoprotein reductase] + H2O + H(+). It catalyses the reaction (5Z,8Z,11Z)-eicosatrienoate + reduced [NADPH--hemoprotein reductase] + O2 = 19-hydroxy-(5Z,8Z,11Z)-eicosatrienoate + oxidized [NADPH--hemoprotein reductase] + H2O + H(+). The catalysed reaction is (5Z,8Z,11Z,14Z)-eicosatetraenoate + reduced [NADPH--hemoprotein reductase] + O2 = 16-hydroxy-(5Z,8Z,11Z,14Z)-eicosatetraenoate + oxidized [NADPH--hemoprotein reductase] + H2O + H(+). It carries out the reaction (5Z,8Z,11Z,14Z)-eicosatetraenoate + reduced [NADPH--hemoprotein reductase] + O2 = 17-hydroxy-(5Z,8Z,11Z,14Z)-eicosatetraenoate + oxidized [NADPH--hemoprotein reductase] + H2O + H(+). The enzyme catalyses (5Z,8Z,11Z,14Z)-eicosatetraenoate + reduced [NADPH--hemoprotein reductase] + O2 = 18-hydroxy-(5Z,8Z,11Z,14Z)-eicosatetraenoate + oxidized [NADPH--hemoprotein reductase] + H2O + H(+). It catalyses the reaction (5Z,8Z,11Z,14Z)-eicosatetraenoate + reduced [NADPH--hemoprotein reductase] + O2 = 19-hydroxy-(5Z,8Z,11Z,14Z)-eicosatetraenoate + oxidized [NADPH--hemoprotein reductase] + H2O + H(+). The catalysed reaction is (5Z,8Z,11Z,14Z,17Z)-eicosapentaenoate + reduced [NADPH--hemoprotein reductase] + O2 = 19-hydroxy-(5Z,8Z,11Z,14Z,17Z)-eicosapentaenoate + oxidized [NADPH--hemoprotein reductase] + H2O + H(+). It carries out the reaction (5Z,8Z,11Z,14Z)-eicosatetraenoate + reduced [NADPH--hemoprotein reductase] + O2 = (8R,9S)-epoxy-(5Z,11Z,14Z)-eicosatrienoate + oxidized [NADPH--hemoprotein reductase] + H2O + H(+). The enzyme catalyses (5Z,8Z,11Z,14Z)-eicosatetraenoate + reduced [NADPH--hemoprotein reductase] + O2 = (11R,12S)-epoxy-(5Z,8Z,14Z)-eicosatrienoate + oxidized [NADPH--hemoprotein reductase] + H2O + H(+). It catalyses the reaction (5Z,8Z,11Z,14Z)-eicosatetraenoate + reduced [NADPH--hemoprotein reductase] + O2 = (11S,12R)-epoxy-(5Z,8Z,14Z)-eicosatrienoate + oxidized [NADPH--hemoprotein reductase] + H2O + H(+). The catalysed reaction is (5Z,8Z,11Z,14Z)-eicosatetraenoate + reduced [NADPH--hemoprotein reductase] + O2 = (14R,15S)-epoxy-(5Z,8Z,11Z)-eicosatrienoate + oxidized [NADPH--hemoprotein reductase] + H2O + H(+). It carries out the reaction (5Z,8Z,11Z,14Z,17Z)-eicosapentaenoate + reduced [NADPH--hemoprotein reductase] + O2 = (17R,18S)-epoxy-(5Z,8Z,11Z,14Z)-eicosatetraenoate + oxidized [NADPH--hemoprotein reductase] + H2O + H(+). The enzyme catalyses (4Z,7Z,10Z,13Z,16Z,19Z)-docosahexaenoate + reduced [NADPH--hemoprotein reductase] + O2 = (19S,20R)-epoxy-(4Z,7Z,10Z,13Z,16Z)-docosapentaenoate + oxidized [NADPH--hemoprotein reductase] + H2O + H(+). It catalyses the reaction (4Z,7Z,10Z,13Z,16Z,19Z)-docosahexaenoate + reduced [NADPH--hemoprotein reductase] + O2 = (19R,20S)-epoxy-(4Z,7Z,10Z,13Z,16Z)-docosapentaenoate + oxidized [NADPH--hemoprotein reductase] + H2O + H(+). The catalysed reaction is all-trans-retinol + reduced [NADPH--hemoprotein reductase] + O2 = all-trans-retinal + oxidized [NADPH--hemoprotein reductase] + 2 H2O + H(+). It carries out the reaction all-trans-retinal + reduced [NADPH--hemoprotein reductase] + O2 = all-trans-retinoate + oxidized [NADPH--hemoprotein reductase] + H2O + 2 H(+). The enzyme catalyses (13S)-hydroperoxy-(9Z,11E)-octadecadienoate = 13-oxo-(9Z,11E)-octadecadienoate + H2O. It catalyses the reaction (12S)-hydroperoxy-(5Z,8Z,10E,14Z)-eicosatetraenoate = 12-oxo-(5Z,8Z,10E,14Z)-eicosatetraenoate + H2O. The catalysed reaction is (15S)-hydroperoxy-(5Z,8Z,11Z,13E)-eicosatetraenoate = 15-oxo-(5Z,8Z,11Z,13E)-eicosatetraenoate + H2O. It carries out the reaction (5S)-hydroperoxy-(6E,8Z,11Z,14Z)-eicosatetraenoate = 5-oxo-(6E,8Z,11Z,14Z)-eicosatetraenoate + H2O. It functions in the pathway steroid hormone biosynthesis. Its pathway is lipid metabolism; fatty acid metabolism. The protein operates within cofactor metabolism; retinol metabolism. Functionally, a cytochrome P450 monooxygenase involved in the metabolism of various endogenous substrates, including fatty acids, steroid hormones and vitamins. Mechanistically, uses molecular oxygen inserting one oxygen atom into a substrate, and reducing the second into a water molecule, with two electrons provided by NADPH via cytochrome P450 reductase (CPR; NADPH-ferrihemoprotein reductase). Catalyzes the hydroxylation of carbon-hydrogen bonds. Exhibits high catalytic activity for the formation of hydroxyestrogens from estrone (E1) and 17beta-estradiol (E2), namely 2-hydroxy E1 and E2, as well as D-ring hydroxylated E1 and E2 at the C15alpha and C16alpha positions. Displays different regioselectivities for polyunsaturated fatty acids (PUFA) hydroxylation. Catalyzes the epoxidation of double bonds of certain PUFA. Converts arachidonic acid toward epoxyeicosatrienoic acid (EET) regioisomers, 8,9-, 11,12-, and 14,15-EET, that function as lipid mediators in the vascular system. Displays an absolute stereoselectivity in the epoxidation of eicosapentaenoic acid (EPA) producing the 17(R),18(S) enantiomer. May play an important role in all-trans retinoic acid biosynthesis in extrahepatic tissues. Catalyzes two successive oxidative transformation of all-trans retinol to all-trans retinal and then to the active form all-trans retinoic acid. May also participate in eicosanoids metabolism by converting hydroperoxide species into oxo metabolites (lipoxygenase-like reaction, NADPH-independent). In Rattus norvegicus (Rat), this protein is Cytochrome P450 1A1.